Reading from the N-terminus, the 236-residue chain is MTKRYWNIDLEEMMRAGVHFGHGTRKWNPRMAPYISAKRKGIHIINLTRTARFLSEACDLVFDAASRGKQFLIVGTKNKAADLVSRAAIRARCHYVNKKWLGGMLTNWSTTEKRLHKFRDLRTEQKTEGFNRLPKRDAAVLKRQLSRLETYLGGIKYMTGLPDIVIIIDQQEEYTALRECITLGIPTISLIDTNCNPDLADISIPANDDAIASIRFILNKLVFAICEGRSSYIQNS.

This sequence belongs to the universal ribosomal protein uS2 family.

The protein resides in the plastid. Its subcellular location is the chloroplast. In Crucihimalaya wallichii (Rock-cress), this protein is Small ribosomal subunit protein uS2c (rps2).